Here is a 553-residue protein sequence, read N- to C-terminus: Putative transport protein YidE (553 aa).

Helical transmembrane passes span Ile-4–Val-24, Gly-28–Ser-48, Phe-65–Ser-85, Leu-95–Phe-115, and Met-158–Leu-178. 2 consecutive RCK C-terminal domains span residues Gln-191–Gln-276 and Asp-279–Asn-361. Helical transmembrane passes span Met-371 to Val-391, Gly-393 to Leu-413, Ile-439 to Val-459, Leu-464 to Leu-484, Tyr-493 to Ala-513, and Leu-533 to Gly-553.

This sequence belongs to the AAE transporter (TC 2.A.81) family. YidE subfamily.

The protein resides in the cell membrane. The sequence is that of Putative transport protein YidE from Shigella boydii serotype 4 (strain Sb227).